Consider the following 607-residue polypeptide: Proteasome-associated ATPase (607 aa).

Residues Met-1–Ser-17 show a composition bias toward basic and acidic residues. The segment at Met-1 to Leu-65 is disordered. Residues Ala-59–Gln-102 adopt a coiled-coil conformation. Gly-294 to Leu-299 is a binding site for ATP. A docks into pockets in the proteasome alpha-ring region spans residues Tyr-606–Leu-607.

It belongs to the AAA ATPase family. Homohexamer. Assembles into a hexameric ring structure that caps the 20S proteasome core. Strongly interacts with the prokaryotic ubiquitin-like protein Pup through a hydrophobic interface; the interacting region of ARC lies in its N-terminal coiled-coil domain. There is one Pup binding site per ARC hexamer ring. Upon ATP-binding, the C-terminus of ARC interacts with the alpha-rings of the proteasome core, possibly by binding to the intersubunit pockets.

The protein operates within protein degradation; proteasomal Pup-dependent pathway. ATPase which is responsible for recognizing, binding, unfolding and translocation of pupylated proteins into the bacterial 20S proteasome core particle. May be essential for opening the gate of the 20S proteasome via an interaction with its C-terminus, thereby allowing substrate entry and access to the site of proteolysis. Thus, the C-termini of the proteasomal ATPase may function like a 'key in a lock' to induce gate opening and therefore regulate proteolysis. In Gordonia bronchialis (strain ATCC 25592 / DSM 43247 / BCRC 13721 / JCM 3198 / KCTC 3076 / NBRC 16047 / NCTC 10667) (Rhodococcus bronchialis), this protein is Proteasome-associated ATPase.